The following is a 206-amino-acid chain: ATP synthase subunit b (206 aa).

The chain crosses the membrane as a helical span at residues 14 to 34 (VMMPAAVCAAVIGLSALGFAA).

It belongs to the ATPase B chain family. F-type ATPases have 2 components, F(1) - the catalytic core - and F(0) - the membrane proton channel. F(1) has five subunits: alpha(3), beta(3), gamma(1), delta(1), epsilon(1). F(0) has three main subunits: a(1), b(2) and c(10-14). The alpha and beta chains form an alternating ring which encloses part of the gamma chain. F(1) is attached to F(0) by a central stalk formed by the gamma and epsilon chains, while a peripheral stalk is formed by the delta and b chains.

Its subcellular location is the cell inner membrane. Its function is as follows. F(1)F(0) ATP synthase produces ATP from ADP in the presence of a proton or sodium gradient. F-type ATPases consist of two structural domains, F(1) containing the extramembraneous catalytic core and F(0) containing the membrane proton channel, linked together by a central stalk and a peripheral stalk. During catalysis, ATP synthesis in the catalytic domain of F(1) is coupled via a rotary mechanism of the central stalk subunits to proton translocation. Functionally, component of the F(0) channel, it forms part of the peripheral stalk, linking F(1) to F(0). In Geobacter metallireducens (strain ATCC 53774 / DSM 7210 / GS-15), this protein is ATP synthase subunit b.